The primary structure comprises 305 residues: Homeobox protein NANOGP8 (305 aa).

Positions 1 to 96 (MSVDPACPQS…KEDKVPVKKQ (96 aa)) are disordered. Positions 65-82 (SPDSSTSPKGKQPTSAEN) are enriched in polar residues. The segment at residues 95–154 (KQKTRTVFSSTQLCVLNDRFQRQKYLSLQQMQELSNILNLSYKQVKTWFQNQRMKSKRWQ) is a DNA-binding region (homeobox). Tandem repeats lie at residues 196–200 (WSNQT), 201–205 (WNNST), 206–210 (WSNQT), 216–220 (WSNHS), 221–225 (WNTQT), 226–230 (WCTQS), 231–235 (WNNQA), and 236–240 (WNSPF). The interval 196–240 (WSNQTWNNSTWSNQTQNIQSWSNHSWNTQTWCTQSWNNQAWNSPF) is 8 X repeats starting with a Trp in each unit. The sufficient for transactivation activity stretch occupies residues 196–240 (WSNQTWNNSTWSNQTQNIQSWSNHSWNTQTWCTQSWNNQAWNSPF). The interval 241–305 (YNCGEESLQS…YSMNMQPEDV (65 aa)) is sufficient for strong transactivation activity.

This sequence belongs to the Nanog homeobox family.

The protein resides in the nucleus. Functionally, may act as a transcription regulator. When overexpressed, promotes entry of cells into S phase and cell proliferation. The sequence is that of Homeobox protein NANOGP8 (NANOGP8) from Homo sapiens (Human).